The following is a 968-amino-acid chain: RNA polymerase-associated protein RapA (968 aa).

Positions 164-334 (DVGRRHAPRV…FARLRLLDPN (171 aa)) constitute a Helicase ATP-binding domain. An ATP-binding site is contributed by 177-184 (DEVGLGKT). Residues 280 to 283 (DEAH) carry the DEAH box motif. Residues 490–685 (RVEWLMGYLT…ALKAQLEQGR (196 aa)) enclose the Helicase C-terminal domain.

This sequence belongs to the SNF2/RAD54 helicase family. RapA subfamily. In terms of assembly, interacts with the RNAP. Has a higher affinity for the core RNAP than for the holoenzyme. Its ATPase activity is stimulated by binding to RNAP.

In terms of biological role, transcription regulator that activates transcription by stimulating RNA polymerase (RNAP) recycling in case of stress conditions such as supercoiled DNA or high salt concentrations. Probably acts by releasing the RNAP, when it is trapped or immobilized on tightly supercoiled DNA. Does not activate transcription on linear DNA. Probably not involved in DNA repair. The polypeptide is RNA polymerase-associated protein RapA (Salmonella paratyphi A (strain ATCC 9150 / SARB42)).